The following is a 178-amino-acid chain: ATP synthase subunit delta (178 aa).

It belongs to the ATPase delta chain family. In terms of assembly, F-type ATPases have 2 components, F(1) - the catalytic core - and F(0) - the membrane proton channel. F(1) has five subunits: alpha(3), beta(3), gamma(1), delta(1), epsilon(1). F(0) has three main subunits: a(1), b(2) and c(10-14). The alpha and beta chains form an alternating ring which encloses part of the gamma chain. F(1) is attached to F(0) by a central stalk formed by the gamma and epsilon chains, while a peripheral stalk is formed by the delta and b chains.

Its subcellular location is the cell inner membrane. F(1)F(0) ATP synthase produces ATP from ADP in the presence of a proton or sodium gradient. F-type ATPases consist of two structural domains, F(1) containing the extramembraneous catalytic core and F(0) containing the membrane proton channel, linked together by a central stalk and a peripheral stalk. During catalysis, ATP synthesis in the catalytic domain of F(1) is coupled via a rotary mechanism of the central stalk subunits to proton translocation. Its function is as follows. This protein is part of the stalk that links CF(0) to CF(1). It either transmits conformational changes from CF(0) to CF(1) or is implicated in proton conduction. This chain is ATP synthase subunit delta, found in Methylobacillus flagellatus (strain ATCC 51484 / DSM 6875 / VKM B-1610 / KT).